Here is a 317-residue protein sequence, read N- to C-terminus: (R)-citramalyl-CoA lyase (317 aa).

One can recognise a Pyruvate carboxyltransferase domain in the interval 4–281 (VTIVDVAPRD…PTGIDLSALI (278 aa)). R12 provides a ligand contact to substrate. 3 residues coordinate a divalent metal cation: D13, H214, and H216. Residue C247 is part of the active site. Residue N256 coordinates a divalent metal cation.

It belongs to the HMG-CoA lyase family. As to quaternary structure, homodimer. Mn(2+) serves as cofactor. The cofactor is Co(2+). Ni(2+) is required as a cofactor. It depends on Mg(2+) as a cofactor.

The catalysed reaction is (3R)-citramalyl-CoA = pyruvate + acetyl-CoA. Its activity is regulated as follows. Activated by dithioerythritol (DTE) (in vitro). Functionally, involved in the glyoxylate assimilation cycle used to regenerate acetyl-CoA and produce pyruvate as universal precursor for biosynthesis. Catalyzes the cleavage of (R)-citramalyl-CoA to yield acetyl-CoA and pyruvate. The protein is (R)-citramalyl-CoA lyase (ccl) of Chloroflexus aurantiacus (strain ATCC 29366 / DSM 635 / J-10-fl).